Here is a 279-residue protein sequence, read N- to C-terminus: Plasmodesmata-located protein 8 (279 aa).

Residues 1–20 form the signal peptide; the sequence is MRRLFLFSLLFLFFYSSSSS. Residues 21–253 lie on the Extracellular side of the membrane; that stretch reads RSSSESHIFI…PTNGDHVGKS (233 aa). 2 consecutive Gnk2-homologous domains span residues 27 to 135 and 137 to 237; these read HIFI…TNDF and GKPD…GSGY. Cystine bridges form between C34/C113, C89/C98, C101/C126, C148/C215, C191/C200, and C203/C228. Residues 254-274 form a helical membrane-spanning segment; sequence IAIIVGVIAGFAILVVLLSLC. A necessary and sufficient for plasmodesmal targeting region spans residues 254 to 274; sequence IAIIVGVIAGFAILVVLLSLC. The Cytoplasmic portion of the chain corresponds to 275 to 279; sequence RNSMH.

Belongs to the cysteine-rich repeat secretory protein family. Plasmodesmata-located proteins (PDLD) subfamily. As to quaternary structure, interacts with ACBP6; interaction occurs at the plasma membrane. (Microbial infection) Interacts with Grapevine fanleaf virus (GFLV) 2B-MP. As to expression, highly expressed in pollen, lateral root and elongation zone. Higher expression in the reproductive tissues (flowers and buds) than in vegetative organs (leaves and stems). High expression in shoot and root phloem companion cells (at protein level).

Its subcellular location is the cell membrane. It is found in the cell junction. The protein localises to the plasmodesma. Its function is as follows. Modulates cell-to-cell trafficking. This Arabidopsis thaliana (Mouse-ear cress) protein is Plasmodesmata-located protein 8.